Consider the following 157-residue polypeptide: Small ribosomal subunit protein uS7 (157 aa).

It belongs to the universal ribosomal protein uS7 family. Part of the 30S ribosomal subunit. Contacts proteins S9 and S11.

One of the primary rRNA binding proteins, it binds directly to 16S rRNA where it nucleates assembly of the head domain of the 30S subunit. Is located at the subunit interface close to the decoding center, probably blocks exit of the E-site tRNA. This chain is Small ribosomal subunit protein uS7, found in Rhodopirellula baltica (strain DSM 10527 / NCIMB 13988 / SH1).